The primary structure comprises 163 residues: MPSFDIVSEITMHEVRNAVENANRVLSTRYDFRGVEAVIELNEKNESVKLTTESDFQLEQLIEILIGSCVKRGIEHNSLDIPSEAEHHGKLYSKEVKLKQGIETEMAKKITKLIKDSKIKVQTQIQGEQVRVTGKSRDDLQAAIQLVKGAELGQPFQFNNFRD.

This sequence belongs to the YajQ family.

Functionally, nucleotide-binding protein. The sequence is that of Nucleotide-binding protein APL_1231 from Actinobacillus pleuropneumoniae serotype 5b (strain L20).